The sequence spans 232 residues: Uridylate kinase (232 aa).

13 to 14 (GS) serves as a coordination point for ATP. Position 52 (Gly-52) interacts with UMP. Residues Gly-53 and Arg-57 each coordinate ATP. Residues Asp-74 and 122 to 128 (LQPGQST) each bind UMP. Thr-147, Tyr-153, and Asp-156 together coordinate ATP.

Belongs to the UMP kinase family. Homohexamer.

It localises to the cytoplasm. It carries out the reaction UMP + ATP = UDP + ADP. The protein operates within pyrimidine metabolism; CTP biosynthesis via de novo pathway; UDP from UMP (UMPK route): step 1/1. Inhibited by UTP. Catalyzes the reversible phosphorylation of UMP to UDP. This chain is Uridylate kinase, found in Thermofilum pendens (strain DSM 2475 / Hrk 5).